The following is a 40-amino-acid chain: Sarcotoxin-1D (40 aa).

This sequence belongs to the cecropin family.

Its subcellular location is the secreted. Functionally, sarcotoxins, which are potent bactericidal proteins, are produced in response to injury. They are cytotoxic to both Gram-positive and Gram-negative bacteria. This Sarcophaga peregrina (Flesh fly) protein is Sarcotoxin-1D.